A 420-amino-acid polypeptide reads, in one-letter code: F-box/LRR-repeat protein At2g43260 (420 aa).

In terms of domain architecture, F-box spans 7 to 53 (NPNSIDILPELLEEVLLRLPTKSILKCRIVSKQWRSLLESSRFAERH). LRR repeat units lie at residues 112 to 135 (QDWI…LNHN) and 226 to 251 (VYRI…QITV).

This Arabidopsis thaliana (Mouse-ear cress) protein is F-box/LRR-repeat protein At2g43260.